The chain runs to 245 residues: E3 ubiquitin-protein ligase RNF138 (245 aa).

Ala-2 bears the N-acetylalanine mark. The RING-type zinc-finger motif lies at 18-58 (CPVCQEVLKTPVRTTACQHVFCRKCFLTAMRESGAHCPLCR). Residues Cys-86, Cys-89, His-101, and Cys-105 each coordinate Zn(2+). A C2HC RNF-type zinc finger spans residues 86–105 (CRCCAKQIKFYRMRHHYKSC). A disordered region spans residues 125–154 (QDSVGNSNRSETSTSDNTETYQENTSSSGH). Phosphothreonine is present on Thr-142. C2H2-type zinc fingers lie at residues 157-180 (FKCP…NSNH) and 187-215 (VTCP…NQRH). In terms of domain architecture, UIM spans 225-243 (LQLDEETQYQTAVEESFQV).

Interacts with NLK. Interacts with XRCC5/Ku80. Interacts with RBBP8/CtIP. Auto-ubiquitinated.

The protein localises to the chromosome. It catalyses the reaction S-ubiquitinyl-[E2 ubiquitin-conjugating enzyme]-L-cysteine + [acceptor protein]-L-lysine = [E2 ubiquitin-conjugating enzyme]-L-cysteine + N(6)-ubiquitinyl-[acceptor protein]-L-lysine.. The protein operates within protein modification; protein ubiquitination. In terms of biological role, E3 ubiquitin-protein ligase involved in DNA damage response by promoting DNA resection and homologous recombination. Recruited to sites of double-strand breaks following DNA damage and specifically promotes double-strand break repair via homologous recombination. Two different, non-exclusive, mechanisms have been proposed. According to a report, regulates the choice of double-strand break repair by favoring homologous recombination over non-homologous end joining (NHEJ): acts by mediating ubiquitination of XRCC5/Ku80, leading to remove the Ku complex from DNA breaks, thereby promoting homologous recombination. According to another report, cooperates with UBE2Ds E2 ubiquitin ligases (UBE2D1, UBE2D2, UBE2D3 or UBE2D4) to promote homologous recombination by mediating ubiquitination of RBBP8/CtIP. Together with NLK, involved in the ubiquitination and degradation of TCF/LEF. Also exhibits auto-ubiquitination activity in combination with UBE2K. May act as a negative regulator in the Wnt/beta-catenin-mediated signaling pathway. This is E3 ubiquitin-protein ligase RNF138 from Homo sapiens (Human).